The primary structure comprises 133 residues: Ribosome-binding factor A (133 aa).

Belongs to the RbfA family. In terms of assembly, monomer. Binds 30S ribosomal subunits, but not 50S ribosomal subunits or 70S ribosomes.

Its subcellular location is the cytoplasm. Its function is as follows. One of several proteins that assist in the late maturation steps of the functional core of the 30S ribosomal subunit. Associates with free 30S ribosomal subunits (but not with 30S subunits that are part of 70S ribosomes or polysomes). Required for efficient processing of 16S rRNA. May interact with the 5'-terminal helix region of 16S rRNA. This is Ribosome-binding factor A from Escherichia coli O127:H6 (strain E2348/69 / EPEC).